The primary structure comprises 304 residues: Ornithine carbamoyltransferase (304 aa).

Carbamoyl phosphate contacts are provided by residues 53 to 56 (STRT), Q80, R104, and 131 to 134 (HPCQ). Residues N162, D222, and 226–227 (SM) contribute to the L-ornithine site. Residues 261–262 (CL) and R289 contribute to the carbamoyl phosphate site.

Belongs to the aspartate/ornithine carbamoyltransferase superfamily. OTCase family.

The protein localises to the cytoplasm. It catalyses the reaction carbamoyl phosphate + L-ornithine = L-citrulline + phosphate + H(+). The protein operates within amino-acid biosynthesis; L-arginine biosynthesis; L-arginine from L-ornithine and carbamoyl phosphate: step 1/3. Its function is as follows. Reversibly catalyzes the transfer of the carbamoyl group from carbamoyl phosphate (CP) to the N(epsilon) atom of ornithine (ORN) to produce L-citrulline. The chain is Ornithine carbamoyltransferase from Rhizobium johnstonii (strain DSM 114642 / LMG 32736 / 3841) (Rhizobium leguminosarum bv. viciae).